The sequence spans 700 residues: UvrABC system protein B (700 aa).

Positions 26-183 (SGLHRGDRIQ…RALVGIQYLR (158 aa)) constitute a Helicase ATP-binding domain. 39–46 (GVTGSGKT) is a binding site for ATP. Residues 92–115 (YYDYYQPEAYVPSSDTYIEKDASI) carry the Beta-hairpin motif. One can recognise a Helicase C-terminal domain in the interval 430–596 (QVDDLLHEIR…GVTKSVDEVR (167 aa)). Positions 608-627 (REGEAPAPRRLASESAPRSR) are disordered. The UVR domain maps to 631–666 (ETLVGELEIAMREAAVALDFEAAARLRDQLFEVRTA). The disordered stretch occupies residues 667–700 (LGQAPSEARGNAQAPKRPPGSAPQRRAGGGRRGR).

It belongs to the UvrB family. In terms of assembly, forms a heterotetramer with UvrA during the search for lesions. Interacts with UvrC in an incision complex.

The protein localises to the cytoplasm. Its function is as follows. The UvrABC repair system catalyzes the recognition and processing of DNA lesions. A damage recognition complex composed of 2 UvrA and 2 UvrB subunits scans DNA for abnormalities. Upon binding of the UvrA(2)B(2) complex to a putative damaged site, the DNA wraps around one UvrB monomer. DNA wrap is dependent on ATP binding by UvrB and probably causes local melting of the DNA helix, facilitating insertion of UvrB beta-hairpin between the DNA strands. Then UvrB probes one DNA strand for the presence of a lesion. If a lesion is found the UvrA subunits dissociate and the UvrB-DNA preincision complex is formed. This complex is subsequently bound by UvrC and the second UvrB is released. If no lesion is found, the DNA wraps around the other UvrB subunit that will check the other stand for damage. The protein is UvrABC system protein B of Gemmatimonas aurantiaca (strain DSM 14586 / JCM 11422 / NBRC 100505 / T-27).